We begin with the raw amino-acid sequence, 170 residues long: Ribosome maturation factor RimM (170 aa).

The region spanning 98 to 170 is the PRC barrel domain; sequence PDEYYWVDLE…LIVVDWDPDF (73 aa).

It belongs to the RimM family. As to quaternary structure, binds ribosomal protein uS19.

The protein localises to the cytoplasm. Its function is as follows. An accessory protein needed during the final step in the assembly of 30S ribosomal subunit, possibly for assembly of the head region. Essential for efficient processing of 16S rRNA. May be needed both before and after RbfA during the maturation of 16S rRNA. It has affinity for free ribosomal 30S subunits but not for 70S ribosomes. In Xanthomonas oryzae pv. oryzae (strain MAFF 311018), this protein is Ribosome maturation factor RimM.